A 1051-amino-acid chain; its full sequence is Carbamoyl phosphate synthase large chain (1051 aa).

The tract at residues methionine 1–aspartate 399 is carboxyphosphate synthetic domain. ATP contacts are provided by arginine 127, arginine 167, glycine 173, glycine 174, lysine 206, leucine 208, glutamate 213, glycine 239, valine 240, histidine 241, glutamine 282, and glutamate 296. The region spanning arginine 131–leucine 325 is the ATP-grasp 1 domain. Residues glutamine 282, glutamate 296, and asparagine 298 each coordinate Mg(2+). Glutamine 282, glutamate 296, and asparagine 298 together coordinate Mn(2+). Positions isoleucine 400–leucine 548 are oligomerization domain. The interval glutamate 549–asparagine 930 is carbamoyl phosphate synthetic domain. Positions serine 673–phenylalanine 863 constitute an ATP-grasp 2 domain. ATP is bound by residues arginine 709, lysine 748, isoleucine 750, glutamate 755, glycine 779, valine 780, histidine 781, serine 782, glutamine 822, and glutamate 834. Residues glutamine 822, glutamate 834, and asparagine 836 each coordinate Mg(2+). Mn(2+) is bound by residues glutamine 822, glutamate 834, and asparagine 836. Residues asparagine 930–isoleucine 1051 enclose the MGS-like domain. Residues arginine 931–isoleucine 1051 are allosteric domain.

Belongs to the CarB family. In terms of assembly, composed of two chains; the small (or glutamine) chain promotes the hydrolysis of glutamine to ammonia, which is used by the large (or ammonia) chain to synthesize carbamoyl phosphate. Tetramer of heterodimers (alpha,beta)4. The cofactor is Mg(2+). Mn(2+) is required as a cofactor.

The enzyme catalyses hydrogencarbonate + L-glutamine + 2 ATP + H2O = carbamoyl phosphate + L-glutamate + 2 ADP + phosphate + 2 H(+). It carries out the reaction hydrogencarbonate + NH4(+) + 2 ATP = carbamoyl phosphate + 2 ADP + phosphate + 2 H(+). It functions in the pathway amino-acid biosynthesis; L-arginine biosynthesis; carbamoyl phosphate from bicarbonate: step 1/1. The protein operates within pyrimidine metabolism; UMP biosynthesis via de novo pathway; (S)-dihydroorotate from bicarbonate: step 1/3. Its function is as follows. Large subunit of the glutamine-dependent carbamoyl phosphate synthetase (CPSase). CPSase catalyzes the formation of carbamoyl phosphate from the ammonia moiety of glutamine, carbonate, and phosphate donated by ATP, constituting the first step of 2 biosynthetic pathways, one leading to arginine and/or urea and the other to pyrimidine nucleotides. The large subunit (synthetase) binds the substrates ammonia (free or transferred from glutamine from the small subunit), hydrogencarbonate and ATP and carries out an ATP-coupled ligase reaction, activating hydrogencarbonate by forming carboxy phosphate which reacts with ammonia to form carbamoyl phosphate. The polypeptide is Carbamoyl phosphate synthase large chain (Saccharolobus islandicus (strain L.S.2.15 / Lassen #1) (Sulfolobus islandicus)).